A 497-amino-acid polypeptide reads, in one-letter code: MTAAGPGAAPSPGRCDSDPASPGAQSPKDDNEDNSNDGTHPCKRRRMGSGDSSRSCETSSQDLSFSYYPAENLIEYKWPPDETGEYYMLQEQVSEYLGVTSFKRKYPDLERRDLSHKEKLYLRELNVITETQCTLGLTALRSDEVIDLMIKEYPAKHAEYSVILQEKERQRITDHYKEYSQMQQQSTQKVEASKVPEYIKKAAKKAAEFNSNLNRERMEERRAYFDLQTHVIQVPQGKYKVLPTDRTKVSSYPVALIPGQFQEYYKRYSPDELRYLPLNTALYEPPLDPELPALDSDGDSDDGEDGGGDEKRKNKGTSDSSSGNVSEGDSPPDSQEDTFHGRQKSKDKMATPRKDGSKRSVLSKSAPGYKPKVIPNALCGICLKGKESNKKGKAESLIHCSQCDNSGHPSCLDMTMELVSMIKTYPWQCMECKTCIICGQPHHEEEMMFCDVCDRGYHTFCVGLGAIPSGRWICDCCQRAPPTPRKVGRRGKNSKEG.

Over residues 1–13 (MTAAGPGAAPSPG) the composition is skewed to low complexity. Positions 1–61 (MTAAGPGAAP…SSRSCETSSQ (61 aa)) are disordered. Residues S11, S35, and S49 each carry the phosphoserine modification. The interval 88–184 (MLQEQVSEYL…HYKEYSQMQQ (97 aa)) is essential to induce neural progenitor proliferation. An SAY region spans residues 88–294 (MLQEQVSEYL…PPLDPELPAL (207 aa)). K240 participates in a covalent cross-link: Glycyl lysine isopeptide (Lys-Gly) (interchain with G-Cter in SUMO2). A Phosphoserine modification is found at S269. Low complexity predominate over residues 284–295 (EPPLDPELPALD). A disordered region spans residues 284–368 (EPPLDPELPA…RSVLSKSAPG (85 aa)). The interval 291 to 333 (LPALDSDGDSDDGEDGGGDEKRKNKGTSDSSSGNVSEGDSPPD) is essential to induce neural progenitor proliferation. Phosphoserine is present on residues S296, S300, S326, and S330. A compositionally biased stretch (acidic residues) spans 296 to 307 (SDGDSDDGEDGG). Positions 317–327 (TSDSSSGNVSE) are enriched in polar residues. The segment covering 337–358 (DTFHGRQKSKDKMATPRKDGSK) has biased composition (basic and acidic residues). The PHD-type 1; degenerate zinc-finger motif lies at 378 to 435 (LCGICLKGKESNKKGKAESLIHCSQCDNSGHPSCLDMTMELVSMIKTYPWQCMECKTC). K384 is covalently cross-linked (Glycyl lysine isopeptide (Lys-Gly) (interchain with G-Cter in SUMO2)). A PHD-type 2; degenerate zinc finger spans residues 437-480 (ICGQPHHEEEMMFCDVCDRGYHTFCVGLGAIPSGRWICDCCQRA).

Belongs to the SAYP family. As to quaternary structure, component of neural progenitors-specific chromatin remodeling complex (npBAF complex) composed of at least, ARID1A/BAF250A or ARID1B/BAF250B, SMARCD1/BAF60A, SMARCD3/BAF60C, SMARCA2/BRM/BAF190B, SMARCA4/BRG1/BAF190A, SMARCB1/BAF47, SMARCC1/BAF155, SMARCE1/BAF57, SMARCC2/BAF170, PHF10/BAF45A, ACTL6A/BAF53A and actin. Interacts with ACTL6A/BAF53A, SMARCA2/BRM/BAF190B, SMARCA4/BRG1/BAF190A and PBRM1/BAF180. In terms of tissue distribution, widely expressed. Expressed selectively in neural stem and progenitor cells (at protein level).

The protein localises to the nucleus. Its function is as follows. Involved in transcription activity regulation by chromatin remodeling. Belongs to the neural progenitors-specific chromatin remodeling complex (npBAF complex) and is required for the proliferation of neural progenitors. During neural development a switch from a stem/progenitor to a post-mitotic chromatin remodeling mechanism occurs as neurons exit the cell cycle and become committed to their adult state. The transition from proliferating neural stem/progenitor cells to post-mitotic neurons requires a switch in subunit composition of the npBAF and nBAF complexes. As neural progenitors exit mitosis and differentiate into neurons, npBAF complexes which contain ACTL6A/BAF53A and PHF10/BAF45A, are exchanged for homologous alternative ACTL6B/BAF53B and DPF1/BAF45B or DPF3/BAF45C subunits in neuron-specific complexes (nBAF). The npBAF complex is essential for the self-renewal/proliferative capacity of the multipotent neural stem cells. The nBAF complex along with CREST plays a role regulating the activity of genes essential for dendrite growth. The polypeptide is PHD finger protein 10 (Phf10) (Mus musculus (Mouse)).